We begin with the raw amino-acid sequence, 288 residues long: Small ribosomal subunit biogenesis GTPase RsgA (288 aa).

In terms of domain architecture, CP-type G spans 61–218 (TNKLIRPPVS…IVDTPGFSSL (158 aa)). Residues 110–113 (NKID) and 161–169 (GPSGVGKST) contribute to the GTP site. Residues Cys-242, Cys-247, His-249, and Cys-255 each contribute to the Zn(2+) site.

The protein belongs to the TRAFAC class YlqF/YawG GTPase family. RsgA subfamily. In terms of assembly, monomer. Associates with 30S ribosomal subunit, binds 16S rRNA. It depends on Zn(2+) as a cofactor.

The protein resides in the cytoplasm. One of several proteins that assist in the late maturation steps of the functional core of the 30S ribosomal subunit. Helps release RbfA from mature subunits. May play a role in the assembly of ribosomal proteins into the subunit. Circularly permuted GTPase that catalyzes slow GTP hydrolysis, GTPase activity is stimulated by the 30S ribosomal subunit. This chain is Small ribosomal subunit biogenesis GTPase RsgA, found in Clostridium acetobutylicum (strain ATCC 824 / DSM 792 / JCM 1419 / IAM 19013 / LMG 5710 / NBRC 13948 / NRRL B-527 / VKM B-1787 / 2291 / W).